A 199-amino-acid chain; its full sequence is FMN-dependent NADH:quinone oxidoreductase (199 aa).

Ser10 provides a ligand contact to FMN.

It belongs to the azoreductase type 1 family. As to quaternary structure, homodimer. FMN is required as a cofactor.

The enzyme catalyses 2 a quinone + NADH + H(+) = 2 a 1,4-benzosemiquinone + NAD(+). It catalyses the reaction N,N-dimethyl-1,4-phenylenediamine + anthranilate + 2 NAD(+) = 2-(4-dimethylaminophenyl)diazenylbenzoate + 2 NADH + 2 H(+). Quinone reductase that provides resistance to thiol-specific stress caused by electrophilic quinones. In terms of biological role, also exhibits azoreductase activity. Catalyzes the reductive cleavage of the azo bond in aromatic azo compounds to the corresponding amines. This is FMN-dependent NADH:quinone oxidoreductase from Cellvibrio japonicus (strain Ueda107) (Pseudomonas fluorescens subsp. cellulosa).